A 414-amino-acid chain; its full sequence is GA-binding protein subunit beta-2 (414 aa).

ANK repeat units follow at residues D5–T34, L37–A66, V70–A99, L103–A132, and F136–T166. S218 carries the phosphoserine modification. Residues E310–N362 adopt a coiled-coil conformation.

As to quaternary structure, heterotetramer of two alpha and two beta subunits. The C-terminal is necessary for the formation of a heterotetrameric GABP-alpha-2/beta-2 complex, and also facilitates homotypic dimerization. Interacts with ADGRB2. In terms of tissue distribution, high levels in thymus, spleen, kidney and intestine.

It localises to the nucleus. In terms of biological role, transcription factor capable of interacting with purine rich repeats (GA repeats). Must associate with GABP-alpha to bind DNA. The chain is GA-binding protein subunit beta-2 (Gabpb2) from Mus musculus (Mouse).